Here is a 331-residue protein sequence, read N- to C-terminus: Vacuolar protein sorting-associated protein 26B (331 aa).

Residues 310–331 (AAQRYEGSNPEPTSAQAKEETD) form a disordered region.

This sequence belongs to the VPS26 family. As to quaternary structure, component of the heterotrimeric retromer cargo-selective complex (CSC) which is believed to associate with variable sorting nexins to form functionally distinct retromer complex variants.

The protein localises to the cytoplasm. It localises to the membrane. The protein resides in the endosome. Functionally, acts as a component of the retromer cargo-selective complex (CSC). The CSC is believed to be the core functional component of retromer or respective retromer complex variants acting to prevent missorting of selected transmembrane cargo proteins into the lysosomal degradation pathway. Retromer mediates retrograde transport of cargo proteins from endosomes to the trans-Golgi network (TGN). The protein is Vacuolar protein sorting-associated protein 26B (vps26b) of Danio rerio (Zebrafish).